Consider the following 270-residue polypeptide: Glutamate racemase (270 aa).

Residues 13–14 (DS) and 45–46 (YG) contribute to the substrate site. Cysteine 77 (proton donor/acceptor) is an active-site residue. 78 to 79 (NT) serves as a coordination point for substrate. Residue cysteine 185 is the Proton donor/acceptor of the active site. 186-187 (TH) serves as a coordination point for substrate.

It belongs to the aspartate/glutamate racemases family.

It catalyses the reaction L-glutamate = D-glutamate. The protein operates within cell wall biogenesis; peptidoglycan biosynthesis. Its function is as follows. Provides the (R)-glutamate required for cell wall biosynthesis. This Vibrio parahaemolyticus serotype O3:K6 (strain RIMD 2210633) protein is Glutamate racemase.